We begin with the raw amino-acid sequence, 331 residues long: Biotin synthase (331 aa).

Residues 46–275 form the Radical SAM core domain; the sequence is YYGKKVKLNM…TKEIRISGGR (230 aa). The [4Fe-4S] cluster site is built by cysteine 64, cysteine 68, and cysteine 71. Cysteine 108, cysteine 140, cysteine 200, and arginine 270 together coordinate [2Fe-2S] cluster.

Belongs to the radical SAM superfamily. Biotin synthase family. Homodimer. It depends on [4Fe-4S] cluster as a cofactor. [2Fe-2S] cluster is required as a cofactor.

It catalyses the reaction (4R,5S)-dethiobiotin + (sulfur carrier)-SH + 2 reduced [2Fe-2S]-[ferredoxin] + 2 S-adenosyl-L-methionine = (sulfur carrier)-H + biotin + 2 5'-deoxyadenosine + 2 L-methionine + 2 oxidized [2Fe-2S]-[ferredoxin]. The protein operates within cofactor biosynthesis; biotin biosynthesis; biotin from 7,8-diaminononanoate: step 2/2. Functionally, catalyzes the conversion of dethiobiotin (DTB) to biotin by the insertion of a sulfur atom into dethiobiotin via a radical-based mechanism. This chain is Biotin synthase, found in Lysinibacillus sphaericus (strain C3-41).